We begin with the raw amino-acid sequence, 441 residues long: Serine--tRNA ligase (441 aa).

Threonine 250–glutamate 252 serves as a coordination point for L-serine. Residues arginine 281–glutamate 283 and valine 297 each bind ATP. Glutamate 304 contributes to the L-serine binding site. Glutamate 368–serine 371 contacts ATP. Position 402 (threonine 402) interacts with L-serine.

Belongs to the class-II aminoacyl-tRNA synthetase family. Type-1 seryl-tRNA synthetase subfamily. Homodimer. The tRNA molecule binds across the dimer.

The protein resides in the cytoplasm. It catalyses the reaction tRNA(Ser) + L-serine + ATP = L-seryl-tRNA(Ser) + AMP + diphosphate + H(+). The catalysed reaction is tRNA(Sec) + L-serine + ATP = L-seryl-tRNA(Sec) + AMP + diphosphate + H(+). The protein operates within aminoacyl-tRNA biosynthesis; selenocysteinyl-tRNA(Sec) biosynthesis; L-seryl-tRNA(Sec) from L-serine and tRNA(Sec): step 1/1. Its function is as follows. Catalyzes the attachment of serine to tRNA(Ser). Is also able to aminoacylate tRNA(Sec) with serine, to form the misacylated tRNA L-seryl-tRNA(Sec), which will be further converted into selenocysteinyl-tRNA(Sec). The protein is Serine--tRNA ligase of Thermoplasma volcanium (strain ATCC 51530 / DSM 4299 / JCM 9571 / NBRC 15438 / GSS1).